The following is a 598-amino-acid chain: Eukaryotic translation initiation factor 3 subunit D (598 aa).

Residues 104–178 (VKTRGFGRGG…YDKPQRNRDS (75 aa)) are disordered. Gly residues predominate over residues 109–132 (FGRGGGTIFRGRGQRGGAQRGRGG). Residues 165 to 177 (GWKDYDKPQRNRD) show a composition bias toward basic and acidic residues. An RNA gate region spans residues 304–318 (SIDLVTVNENAADAP). The segment at 574-598 (NTFEEEDDTGAKAEKDEESEEKDEE) is disordered. Acidic residues predominate over residues 589–598 (DEESEEKDEE).

Belongs to the eIF-3 subunit D family. As to quaternary structure, component of the eukaryotic translation initiation factor 3 (eIF-3) complex.

It localises to the cytoplasm. Its function is as follows. mRNA cap-binding component of the eukaryotic translation initiation factor 3 (eIF-3) complex, which is involved in protein synthesis of a specialized repertoire of mRNAs and, together with other initiation factors, stimulates binding of mRNA and methionyl-tRNAi to the 40S ribosome. The eIF-3 complex specifically targets and initiates translation of a subset of mRNAs involved in cell proliferation. In the eIF-3 complex, eif3d specifically recognizes and binds the 7-methylguanosine cap of a subset of mRNAs. The protein is Eukaryotic translation initiation factor 3 subunit D of Coccidioides immitis (strain RS) (Valley fever fungus).